The sequence spans 912 residues: Eukaryotic translation initiation factor 3 subunit C (912 aa).

Positions 1–44 (MSRFFTTGSDSESESSLSGEELVTKPVGGNYGKQPLLLSEDEED) are disordered. The segment covering 8-21 (GSDSESESSLSGEE) has biased composition (low complexity). Residues Ser9, Ser11, Ser13, Ser15, Ser16, Ser18, and Ser39 each carry the phosphoserine modification. Position 99 is an N6-acetyllysine (Lys99). Disordered regions lie at residues 157 to 305 (TNYK…RVRG) and 521 to 541 (QLTP…NEGE). 4 positions are modified to phosphoserine: Ser166, Ser178, Ser181, and Ser182. A compositionally biased stretch (acidic residues) spans 166 to 190 (SADEDAEKNEEDSEGSSDEDEDDDG). The span at 199-215 (KKSEAPSGDSRKFLKKE) shows a compositional bias: basic and acidic residues. Residues 216-229 (DEDEDSEESEDSEA) show a composition bias toward acidic residues. The span at 260–277 (PTTEEDKKAAEKKREDKA) shows a compositional bias: basic and acidic residues. Over residues 521 to 530 (QLTPPEGSSK) the composition is skewed to polar residues. Thr523 is subject to Phosphothreonine. An N6-acetyllysine modification is found at Lys642. Residues 672 to 848 (FHLHINLELL…QTVVMHRTEP (177 aa)) form the PCI domain. A disordered region spans residues 884–912 (FRDQKDGYRKNEGYMRRGGYRQQQSQTAY). Residues 885–898 (RDQKDGYRKNEGYM) are compositionally biased toward basic and acidic residues. Ser908 carries the post-translational modification Phosphoserine.

Belongs to the eIF-3 subunit C family. As to quaternary structure, component of the eukaryotic translation initiation factor 3 (eIF-3) complex, which is composed of 13 subunits: EIF3A, EIF3B, EIF3C, EIF3D, EIF3E, EIF3F, EIF3G, EIF3H, EIF3I, EIF3J, EIF3K, EIF3L and EIF3M. The eIF-3 complex appears to include 3 stable modules: module A is composed of EIF3A, EIF3B, EIF3G and EIF3I; module B is composed of EIF3F, EIF3H, and EIF3M; and module C is composed of EIF3C, EIF3D, EIF3E, EIF3K and EIF3L. EIF3C of module C binds EIF3B of module A and EIF3H of module B, thereby linking the three modules. EIF3J is a labile subunit that binds to the eIF-3 complex via EIF3B. The eIF-3 complex interacts with RPS6KB1 under conditions of nutrient depletion. Mitogenic stimulation leads to binding and activation of a complex composed of MTOR and RPTOR, leading to phosphorylation and release of RPS6KB1 and binding of EIF4B to eIF-3. Identified in a HCV IRES-mediated translation complex, at least composed of EIF3C, IGF2BP1, RPS3 and HCV RNA-replicon. Interacts with ALKBH4, IFIT1 and IFIT2. Interacts with BZW2/5MP1. Post-translationally, phosphorylated. Phosphorylation is enhanced upon serum stimulation.

Its subcellular location is the cytoplasm. Functionally, component of the eukaryotic translation initiation factor 3 (eIF-3) complex, which is required for several steps in the initiation of protein synthesis. The eIF-3 complex associates with the 40S ribosome and facilitates the recruitment of eIF-1, eIF-1A, eIF-2:GTP:methionyl-tRNAi and eIF-5 to form the 43S pre-initiation complex (43S PIC). The eIF-3 complex stimulates mRNA recruitment to the 43S PIC and scanning of the mRNA for AUG recognition. The eIF-3 complex is also required for disassembly and recycling of post-termination ribosomal complexes and subsequently prevents premature joining of the 40S and 60S ribosomal subunits prior to initiation. The eIF-3 complex specifically targets and initiates translation of a subset of mRNAs involved in cell proliferation, including cell cycling, differentiation and apoptosis, and uses different modes of RNA stem-loop binding to exert either translational activation or repression. The chain is Eukaryotic translation initiation factor 3 subunit C from Bos taurus (Bovine).